Reading from the N-terminus, the 450-residue chain is Bifunctional apoptosis regulator (450 aa).

Residues 1-20 show a composition bias toward basic and acidic residues; the sequence is MEEPQKNDLSMREQEEEHPV. A disordered region spans residues 1–25; it reads MEEPQKNDLSMREQEEEHPVRSSGP. Residues 1 to 140 lie on the Cytoplasmic side of the membrane; sequence MEEPQKNDLS…PSTGRVNPQR (140 aa). Residues 34-74 form an RING-type zinc finger; that stretch reads CHCCYDTLVNPTTLNCGHSFCRHCLALWWMSSKKTECPECR. Residues 141–161 form a helical membrane-spanning segment; that stretch reads GGGFFSGVLTALTGVAVILLV. Residues 162–331 are Extracellular-facing; that stretch reads YHWRSRESEH…REPTWKQWRE (170 aa). The 68-residue stretch at 182–249 folds into the SAM domain; sequence WTMEEVVLWL…LTELERVRAL (68 aa). Asparagine 232 and asparagine 308 each carry an N-linked (GlcNAc...) asparagine glycan. A helical transmembrane segment spans residues 332 to 352; it reads FLVKYSFLPYQLIAEFAWDWL. Over 353–360 the chain is Cytoplasmic; it reads EVHYWTSR. A helical transmembrane segment spans residues 361-381; that stretch reads FLIVNAVLLSVLELFSFWRIW. Topologically, residues 382-404 are extracellular; sequence SRSELKTVPQRMWSHFWKVSTQG. A helical membrane pass occupies residues 405 to 425; the sequence is LFMAMFWPLIPQFVCNCLFYW. Residues 426–450 are Cytoplasmic-facing; sequence ALYFNPIINIDLVVKEVRRLETQVL.

In terms of assembly, interacts with CASP8, BCL2 and BCL2L1 through SAM domain and also with HIP1, IFT57, ESRRBL1 and BCAP31. Interacts with NGFR; this interaction inhibits NF-kappa-B and JNK-related signaling pathways. In terms of processing, mediates RING-dependent self-ubiquitination leading to proteasomal degradation.

The protein resides in the endoplasmic reticulum membrane. It carries out the reaction S-ubiquitinyl-[E2 ubiquitin-conjugating enzyme]-L-cysteine + [acceptor protein]-L-lysine = [E2 ubiquitin-conjugating enzyme]-L-cysteine + N(6)-ubiquitinyl-[acceptor protein]-L-lysine.. Functionally, membrane-bound E3 ubiquitin ligase that plays a role in several processes including apoptosis regulation or reticulum endoplasmic stress. Has anti-apoptotic activity, both for apoptosis triggered via death-receptors and via mitochondrial factors. Contributes to the dynamic control of IRE1/ERN1 signaling during ER stress by inducing BAX inhibitor 1/TMBIM6 proteasomal degradation. Promotes the activation of TGF-beta signaling by mediating the 'Lys-63'-linked ubiquitination of TGFBR1 which is critical to activate the pathway. Together with NGFR, negatively regulates NF-kappa-B and JNK-related signaling pathways. Promotes the proteasome-mediated degradation of PNPLA3, a protein involveld in lipid metabolism. The protein is Bifunctional apoptosis regulator (Bfar) of Mus musculus (Mouse).